Consider the following 362-residue polypeptide: Peptide chain release factor 1 (362 aa).

Residue Gln235 is modified to N5-methylglutamine.

This sequence belongs to the prokaryotic/mitochondrial release factor family. Post-translationally, methylated by PrmC. Methylation increases the termination efficiency of RF1.

Its subcellular location is the cytoplasm. Functionally, peptide chain release factor 1 directs the termination of translation in response to the peptide chain termination codons UAG and UAA. The sequence is that of Peptide chain release factor 1 from Acinetobacter baylyi (strain ATCC 33305 / BD413 / ADP1).